The following is a 510-amino-acid chain: 2,3-bisphosphoglycerate-independent phosphoglycerate mutase (510 aa).

2 residues coordinate Mn(2+): aspartate 13 and serine 63. Serine 63 (phosphoserine intermediate) is an active-site residue. Substrate contacts are provided by residues histidine 124, 154 to 155 (RD), arginine 186, arginine 192, 262 to 265 (RADR), and lysine 334. Mn(2+) is bound by residues aspartate 401, histidine 405, aspartate 442, histidine 443, and histidine 461.

This sequence belongs to the BPG-independent phosphoglycerate mutase family. Monomer. Requires Mn(2+) as cofactor.

It catalyses the reaction (2R)-2-phosphoglycerate = (2R)-3-phosphoglycerate. The protein operates within carbohydrate degradation; glycolysis; pyruvate from D-glyceraldehyde 3-phosphate: step 3/5. Its function is as follows. Catalyzes the interconversion of 2-phosphoglycerate and 3-phosphoglycerate. The chain is 2,3-bisphosphoglycerate-independent phosphoglycerate mutase from Vibrio cholerae serotype O1 (strain ATCC 39541 / Classical Ogawa 395 / O395).